The following is a 92-amino-acid chain: MTRSLKKNPFVANHLLRKIEKLNTKAEKEIIITWSRASTIIPTMIGHTIAIHNGREHLPIYITDRMVGHKLGEFSPTINFRGHAKNDNRSRR.

The protein belongs to the universal ribosomal protein uS19 family.

The protein resides in the plastid. Its subcellular location is the chloroplast. Functionally, protein S19 forms a complex with S13 that binds strongly to the 16S ribosomal RNA. This is Small ribosomal subunit protein uS19c from Eucalyptus globulus subsp. globulus (Tasmanian blue gum).